A 274-amino-acid polypeptide reads, in one-letter code: DegV domain-containing protein Cgl2349/cg2579 (274 aa).

One can recognise a DegV domain in the interval 3–259; it reads VRVIVDSSAC…PGAVSVSAVF (257 aa). Residues T39 and S73 each coordinate hexadecanoate.

In terms of assembly, monomer.

Binds long-chain fatty acids, such as palmitate, and may play a role in lipid transport or fatty acid metabolism. This chain is DegV domain-containing protein Cgl2349/cg2579, found in Corynebacterium glutamicum (strain ATCC 13032 / DSM 20300 / JCM 1318 / BCRC 11384 / CCUG 27702 / LMG 3730 / NBRC 12168 / NCIMB 10025 / NRRL B-2784 / 534).